Consider the following 125-residue polypeptide: Small ribosomal subunit protein uS12 (125 aa).

The segment at 9 to 31 is disordered; it reads RQGREVEKIKSKSPAMENSPQRR. Asp89 carries the post-translational modification 3-methylthioaspartic acid. The disordered stretch occupies residues 106 to 125; that stretch reads GVKDRKQSRSKYGAKRPKKA. The span at 113-125 shows a compositional bias: basic residues; it reads SRSKYGAKRPKKA.

Belongs to the universal ribosomal protein uS12 family. In terms of assembly, part of the 30S ribosomal subunit. Contacts proteins S8 and S17. May interact with IF1 in the 30S initiation complex.

In terms of biological role, with S4 and S5 plays an important role in translational accuracy. Functionally, interacts with and stabilizes bases of the 16S rRNA that are involved in tRNA selection in the A site and with the mRNA backbone. Located at the interface of the 30S and 50S subunits, it traverses the body of the 30S subunit contacting proteins on the other side and probably holding the rRNA structure together. The combined cluster of proteins S8, S12 and S17 appears to hold together the shoulder and platform of the 30S subunit. The chain is Small ribosomal subunit protein uS12 from Polaromonas sp. (strain JS666 / ATCC BAA-500).